A 179-amino-acid chain; its full sequence is Putative ADP-ribosylation factor-like protein 5C (179 aa).

The N-myristoyl glycine moiety is linked to residue Gly-2. Residues 23–30, 66–70, and 125–128 each bind GTP; these read GLDNEGKT, DIVRP, and NKQD.

The protein belongs to the small GTPase superfamily. Arf family.

In terms of biological role, binds and exchanges GTP and GDP. The polypeptide is Putative ADP-ribosylation factor-like protein 5C (ARL5C) (Homo sapiens (Human)).